Reading from the N-terminus, the 87-residue chain is Keratin-associated protein 19-3 (87 aa).

The interval 9-82 (GGLGYGYGSF…RRPSCCGGYG (74 aa)) is 23 X 2 AA repeats of G-[YCGS].

The protein belongs to the KRTAP type 19 family. Interacts with hair keratins. Strong expression in narrowly defined pattern restricted to the lower and middle cortical regions of the hair shaft in both developing and cycling hair. During hair follicle regression (catagen), expression levels decrease until expression is no longer detectable in follicles at resting stage (telogen).

Its function is as follows. In the hair cortex, hair keratin intermediate filaments are embedded in an interfilamentous matrix, consisting of hair keratin-associated proteins (KRTAP), which are essential for the formation of a rigid and resistant hair shaft through their extensive disulfide bond cross-linking with abundant cysteine residues of hair keratins. The matrix proteins include the high-sulfur and high-glycine-tyrosine keratins. The chain is Keratin-associated protein 19-3 (Krtap19-3) from Mus musculus (Mouse).